We begin with the raw amino-acid sequence, 148 residues long: 3-dehydroquinate dehydratase (148 aa).

Tyr-24 acts as the Proton acceptor in catalysis. Residues Asn-75, His-81, and Asp-88 each coordinate substrate. His-101 (proton donor) is an active-site residue. Residues 102–103 (LS) and Arg-112 contribute to the substrate site.

It belongs to the type-II 3-dehydroquinase family. As to quaternary structure, homododecamer.

The catalysed reaction is 3-dehydroquinate = 3-dehydroshikimate + H2O. It functions in the pathway metabolic intermediate biosynthesis; chorismate biosynthesis; chorismate from D-erythrose 4-phosphate and phosphoenolpyruvate: step 3/7. Functionally, catalyzes a trans-dehydration via an enolate intermediate. This chain is 3-dehydroquinate dehydratase, found in Rhizobium meliloti (strain 1021) (Ensifer meliloti).